We begin with the raw amino-acid sequence, 397 residues long: UPF0761 membrane protein Kkor_1635 (397 aa).

The next 6 membrane-spanning stretches (helical) occupy residues 36–56 (MLAL…FPSF), 92–112 (NLSA…MRSI), 132–152 (ILAY…SLAA), 168–188 (ILTF…LYMV), 201–221 (IAAV…AIFV), and 237–257 (IPIF…GVIV).

Belongs to the UPF0761 family.

The protein resides in the cell inner membrane. The protein is UPF0761 membrane protein Kkor_1635 of Kangiella koreensis (strain DSM 16069 / JCM 12317 / KCTC 12182 / SW-125).